The chain runs to 576 residues: MIVFGWAVFLASRSLGQGLLLTLEEHIAHFLGTGGAATTMGNSCICRDDSGTDDSVDTQQQQAENSAVPTADTRSQPRDPVRPPRRGRGPHEPRRKKQNVDGLVLDTLAVIRTLVDNDQEPPYSMITLHEMAETDEGWLDVVQSLIRVIPLEDPLGPAVITLLLDECPLPTKDALQKLTEILNLNGEVACQDSSHPAKHRNTSAVLGCLAEKLAGPASIGLLSPGILEYLLQCLKLQSHPTVMLFALIALEKFAQTSENKLTISESSISDRLVTLESWANDPDYLKRQVGFCAQWSLDNLFLKEGRQLTYEKVNLSSIRAMLNSNDVSEYLKISPHGLEARCDASSFESVRCTFCVDAGVWYYEVTVVTSGVMQIGWATRDSKFLNHEGYGIGDDEYSCAYDGCRQLIWYNARSKPHIHPCWKEGDTVGFLLDLNEKQMIFFLNGNQLPPEKQVFSSTVSGFFAAASFMSYQQCEFNFGAKPFKYPPSMKFSTFNDYAFLTAEEKIILPRHRRLALLKQVSIRENCCSLCCDEVADTQLKPCGHSDLCMDCALQLETCPLCRKEIVSRIRQISHIS.

The N-terminal stretch at 1–16 (MIVFGWAVFLASRSLG) is a signal peptide. S50 bears the Phosphoserine mark. Positions 50–99 (SGTDDSVDTQQQQAENSAVPTADTRSQPRDPVRPPRRGRGPHEPRRKKQN) are disordered. Residues 57 to 68 (DTQQQQAENSAV) are compositionally biased toward polar residues. Residues 83–97 (PPRRGRGPHEPRRKK) are compositionally biased toward basic residues. The 184-residue stretch at 300–483 (LFLKEGRQLT…CEFNFGAKPF (184 aa)) folds into the B30.2/SPRY domain. N-linked (GlcNAc...) asparagine glycosylation is present at N314. The RING-type zinc-finger motif lies at 527-562 (CSLCCDEVADTQLKPCGHSDLCMDCALQLETCPLCR).

Its subcellular location is the secreted. The protein is RING finger and SPRY domain-containing protein 1 (RSPRY1) of Homo sapiens (Human).